We begin with the raw amino-acid sequence, 118 residues long: Large ribosomal subunit protein bL19 (118 aa).

Belongs to the bacterial ribosomal protein bL19 family.

This protein is located at the 30S-50S ribosomal subunit interface and may play a role in the structure and function of the aminoacyl-tRNA binding site. The chain is Large ribosomal subunit protein bL19 from Campylobacter hominis (strain ATCC BAA-381 / DSM 21671 / CCUG 45161 / LMG 19568 / NCTC 13146 / CH001A).